A 302-amino-acid polypeptide reads, in one-letter code: NADH-cytochrome b5 reductase 2 (302 aa).

The propeptide at 1 to 41 is removed in mature form; the sequence is MFSRLSRSHSKALPIALGTVAIAAATAFYFANRNQHSFVFN. Residues 12–32 traverse the membrane as a helical segment; it reads ALPIALGTVAIAAATAFYFAN. Residues 51–155 form the FAD-binding FR-type domain; sequence DKWIDLPISK…KGPIMKWKWQ (105 aa). 158–193 provides a ligand contact to FAD; sequence QFKSITLLGAGTGINPLYQLAHHIVENPNDKTKVNL. Residue S278 is modified to Phosphoserine.

The protein belongs to the flavoprotein pyridine nucleotide cytochrome reductase family. Requires FAD as cofactor. Post-translationally, there are two isoforms of NADH-cytochrome b5 reductase, a 34 kDa form (p34) and a 32 kDa form (p32). The p34 form becomes firmly anchored to the outer mitochondrial membrane after an incomplete translocation arrest. The p32 form is formed after translocation of the p34 precursor to the inner mitochondrial membrane, where it is processed by mitochondrial inner membrane peptidase (IMP) complex and released to the intermembrane space.

It localises to the mitochondrion intermembrane space. It is found in the mitochondrion outer membrane. The enzyme catalyses 2 Fe(III)-[cytochrome b5] + NADH = 2 Fe(II)-[cytochrome b5] + NAD(+) + H(+). The outer membrane form may mediate the reduction of outer membrane cytochrome b5, and the soluble inter-membrane space form may transfer electrons from external NADH to cytochrome c, thereby mediating an antimycin-insensitive, energy-coupled oxidation of external NADH by yeast mitochondria. Involved in the reduction of D-erythroascorbyl free radicals. This is NADH-cytochrome b5 reductase 2 (MCR1) from Saccharomyces cerevisiae (strain YJM789) (Baker's yeast).